A 2310-amino-acid chain; its full sequence is Retinal-specific phospholipid-transporting ATPase ABCA4 (2310 aa).

Topologically, residues 1 to 21 (MGFLRQIQLLLWKNWTLRKRQ) are cytoplasmic. A helical membrane pass occupies residues 22–42 (KIRFVVELVWPLSLFLVLIWL). Topologically, residues 43-646 (RNANPLYSQH…MPYPCFVDDS (604 aa)) are extracellular. Intrachain disulfides connect cysteine 54–cysteine 81 and cysteine 75–cysteine 324. The N-linked (GlcNAc...) asparagine glycan is linked to asparagine 98. Serine 336 and asparagine 338 together coordinate Mg(2+). A disulfide bridge connects residues cysteine 370 and cysteine 519. Asparagine 415 and asparagine 504 each carry an N-linked (GlcNAc...) asparagine glycan. Residues arginine 587 and arginine 653 each coordinate an N-all-trans-retinylidenephosphatidylethanolamine. Intrachain disulfides connect cysteine 641–cysteine 1489, cysteine 1443–cysteine 1454, and cysteine 1487–cysteine 1501. A helical membrane pass occupies residues 647-667 (FMIILNRCFPIFMVLAWIYSV). The Cytoplasmic segment spans residues 668–699 (SMTVKGIVLEKELRLKETLKNQGVSNAVIWCT). Residues 700-720 (WFLDSFSIMALSIFLLTLFIM) form a helical membrane-spanning segment. The Extracellular portion of the chain corresponds to 721 to 730 (HGRILHYSDP). Residues 731–751 (FILFLFLLAFATATIMQSFLL) traverse the membrane as a helical segment. Residues 752-759 (STLFSKAS) are Cytoplasmic-facing. Residues 760–780 (LAAACSGVIYFTLYLPHVLCF) traverse the membrane as a helical segment. The Extracellular segment spans residues 781 to 835 (AWQDRMTADLKTTVSLLSSVAFGFGTEYLVRFEEQGLGLQWSNIGKSPLEGDEFS). A helical membrane pass occupies residues 836-856 (FLLSMKMMLLDAALYGLLAWY). Residues 857–1375 (LDQVFPGDYG…IRSRKDFVAQ (519 aa)) lie on the Cytoplasmic side of the membrane. The interval 891-910 (ERALEKTEPLTEEMEDPEHP) is disordered. Position 901 is a phosphothreonine (threonine 901). Positions 929–1160 (VCVKNLVKVF…FGTGFYLTLV (232 aa)) constitute an ABC transporter 1 domain. ATP contacts are provided by phenylalanine 938, glycine 966, and lysine 969. Threonine 970 contacts Mg(2+). ATP is bound by residues threonine 971, glutamine 1010, lysine 1054, glycine 1064, glycine 1065, and histidine 1118. Serine 1185 bears the Phosphoserine mark. The disordered stretch occupies residues 1311 to 1344 (RQYAQAPHTCSPGQVDPPKGQPSPEPEDPGVPFN). The chain crosses the membrane as a helical span at residues 1376-1396 (IVLPATFVFLALMLSIIVPPF). At 1397-1726 (GEFPALTLHP…VSPTTYWLTN (330 aa)) the chain is on the extracellular side. N-linked (GlcNAc...) asparagine glycosylation is present at asparagine 1468. 3 N-linked (GlcNAc...) asparagine glycosylation sites follow: asparagine 1528, asparagine 1587, and asparagine 1661. The helical transmembrane segment at 1727–1747 (FLWDIMNYAVSAGLVVGIFIG) threads the bilayer. Residues 1748-1758 (FQKKAYTSPDN) lie on the Cytoplasmic side of the membrane. Residues 1759–1779 (LPALVSLLMLYGWAVIPMMYP) form a helical membrane-spanning segment. At 1780–1791 (ASFLFEVPSTAY) the chain is on the extracellular side. Residues 1792–1812 (VALSCANLFIGINSSAITFVL) form a helical membrane-spanning segment. The Cytoplasmic segment spans residues 1813 to 1830 (ELFENNRTLLRFNAMLRK). The chain crosses the membrane as a helical span at residues 1831 to 1851 (LLIVFPHFCLGRGLIDLALSQ). Topologically, residues 1852–1872 (AVTDVYAQFGEEYSANPFQWD) are extracellular. The chain crosses the membrane as a helical span at residues 1873–1893 (LIGKNLVAMAIEGVVYFLLTL). Over 1894–2310 (LIQHHFFLTR…AEDKHTRSPQ (417 aa)) the chain is Cytoplasmic. The 233-residue stretch at 1937-2169 (LKLNELTKVY…FGDGYIVTMK (233 aa)) folds into the ABC transporter 2 domain. Asparagine 1973, glycine 1974, lysine 1977, threonine 1978, threonine 1979, and glycine 2072 together coordinate ATP. Residue threonine 1978 coordinates Mg(2+). An essential for ATP binding and ATPase activity region spans residues 2243–2248 (VFVNFA). A disordered region spans residues 2266–2310 (ASWQAKLEEKSGRLQTQEPLPAGSEQLANGSNPTAAEDKHTRSPQ). Residues 2301–2310 (AEDKHTRSPQ) are compositionally biased toward basic and acidic residues.

It belongs to the ABC transporter superfamily. ABCA family. In terms of processing, N-glycosylated. Post-translationally, proteolytic cleavage by trypsin leads to a 120-kDa N-terminal fragment and a 115-kDa C-terminal fragment that are linked through disulfide bonds. Phosphorylation is independent of light exposure and modulates ATPase activity. As to expression, retinal-specific. Seems to be exclusively found in the rims of rod photoreceptor cells.

Its subcellular location is the membrane. The protein resides in the endoplasmic reticulum. It localises to the cell projection. The protein localises to the cilium. It is found in the photoreceptor outer segment. The catalysed reaction is an N-all-trans-retinylidenephosphatidylethanolamine(out) + ATP + H2O = an N-all-trans-retinylidenephosphatidylethanolamine(in) + ADP + phosphate + H(+). It catalyses the reaction ATP + H2O + phospholipidSide 1 = ADP + phosphate + phospholipidSide 2.. The enzyme catalyses a 1,2-diacyl-sn-glycero-3-phosphoethanolamine(out) + ATP + H2O = a 1,2-diacyl-sn-glycero-3-phosphoethanolamine(in) + ADP + phosphate + H(+). It carries out the reaction N-11-cis-retinylidenephosphatidylethanolamine(out) + ATP + H2O = N-11-cis-retinylidenephosphatidylethanolamine(in) + ADP + phosphate + H(+). The catalysed reaction is ATP + H2O = ADP + phosphate + H(+). ATPase activity is decreased by cholesterol and ceramide. Phospholipids translocase activity is highly reduced by berylium fluoride and aluminum floride. N-ethylmaleimide inhibits phospholipid translocase activity. Flippase that catalyzes in an ATP-dependent manner the transport of retinal-phosphatidylethanolamine conjugates like the 11-cis and all-trans isomers of N-retinylidene-phosphatidylethanolamine from the lumen to the cytoplasmic leaflet of photoreceptor outer segment disk membranes, where N-cis-retinylidene-phosphatidylethanolamine (N-cis-R-PE) is then isomerized to its all-trans isomer (N-trans-R-PE) and reduced by RDH8 to produce all-trans-retinol (all-trans-rol) and therefore prevents the accumulation of excess of 11-cis-retinal and its schiff-base conjugate and the formation of toxic bisretinoid. Displays ATPase activity in vitro in absence of retinal substrate. May display GTPase activity that is strongly influenced by the lipid environment and the presence of retinoid compounds. Binds the unprotonated form of N-retinylidene-phosphatidylethanolamine with high affinity in the absence of ATP and ATP binding and hydrolysis induce a protein conformational change that causes the dissociation of N-retinylidene-phosphatidylethanolamine. The chain is Retinal-specific phospholipid-transporting ATPase ABCA4 from Mus musculus (Mouse).